The sequence spans 206 residues: Probable peptidyl-tRNA hydrolase (206 aa).

His48 functions as the Proton acceptor in the catalytic mechanism. TRNA is bound by residues Tyr83, Asn85, and Asn137.

The protein belongs to the PTH family.

Its subcellular location is the mitochondrion. The enzyme catalyses an N-acyl-L-alpha-aminoacyl-tRNA + H2O = an N-acyl-L-amino acid + a tRNA + H(+). In terms of biological role, peptidyl-tRNA hydrolase involved in the recycling of tRNA-Lys from diacetyl-lysyl-tRNA-Lys and is important for mitochondrial function. This Schizosaccharomyces pombe (strain 972 / ATCC 24843) (Fission yeast) protein is Probable peptidyl-tRNA hydrolase (pth1).